The following is a 219-amino-acid chain: Kappa-scoloptoxin(11)-Ss1a (219 aa).

An N-terminal signal peptide occupies residues 1 to 16 (MFYSHLLFFTFTFACS). Residues 17–25 (SSLNRKTKR) constitute a propeptide that is removed on maturation.

Post-translationally, contains 8 disulfide bonds. Expressed by the venom gland.

It is found in the secreted. Its function is as follows. Voltage-gated potassium channel inhibitor. This Scolopendra dehaani (Thai centipede) protein is Kappa-scoloptoxin(11)-Ss1a.